Reading from the N-terminus, the 412-residue chain is Peptidase T (412 aa).

H83 lines the Zn(2+) pocket. The active site involves D85. D145 lines the Zn(2+) pocket. Residue E179 is the Proton acceptor of the active site. Zn(2+) is bound by residues E180, D202, and H384.

It belongs to the peptidase M20B family. It depends on Zn(2+) as a cofactor.

The protein resides in the cytoplasm. It carries out the reaction Release of the N-terminal residue from a tripeptide.. Functionally, cleaves the N-terminal amino acid of tripeptides. This is Peptidase T from Fusobacterium nucleatum subsp. nucleatum (strain ATCC 25586 / DSM 15643 / BCRC 10681 / CIP 101130 / JCM 8532 / KCTC 2640 / LMG 13131 / VPI 4355).